We begin with the raw amino-acid sequence, 366 residues long: Spermine synthase (366 aa).

Ala2 bears the N-acetylalanine mark. Ser57 carries the post-translational modification Phosphoserine. Positions 122–362 constitute a PABS domain; sequence RYWPTADGRL…ELWVFYTVWK (241 aa). S-adenosyl 3-(methylsulfanyl)propylamine is bound at residue Gln148. Residues Tyr177 and Asp201 each contribute to the spermidine site. S-adenosyl 3-(methylsulfanyl)propylamine-binding positions include Glu220 and 255 to 256; that span reads DC. Asp276 serves as the catalytic Proton acceptor. Residues Tyr351 and Glu353 each coordinate spermidine.

It belongs to the spermidine/spermine synthase family. In terms of assembly, homodimer. Dimerization is mediated through the N-terminal domain and seems to be required for activity as deletion of the N-terminal domain causes complete loss of activity.

The catalysed reaction is S-adenosyl 3-(methylsulfanyl)propylamine + spermidine = spermine + S-methyl-5'-thioadenosine + H(+). It functions in the pathway amine and polyamine biosynthesis; spermine biosynthesis; spermine from spermidine: step 1/1. In terms of biological role, catalyzes the production of spermine from spermidine and decarboxylated S-adenosylmethionine (dcSAM). This Homo sapiens (Human) protein is Spermine synthase.